The following is a 244-amino-acid chain: Securin-like protein (244 aa).

The disordered stretch occupies residues 31 to 53 (ELEKTPSRGGLGLVVNSSKTPGG).

In terms of assembly, forms a complex (via C-terminus) with separase sep-1. Interaction with ify-1 stabilizes sep-1. Also maintains the complex in the cytoplasm during interphase and recruits it to chromosomes during the first meiotic division. Interacts with E3 ubiquitin-protein ligase etc-1. Post-translationally, ubiquitinated by etc-1 likely at the onset of anaphase, resulting in its degradation. Expressed in germ cells including oocytes.

The protein localises to the cytoplasm. It localises to the chromosome. It is found in the cytoskeleton. The protein resides in the spindle. In terms of biological role, acts as a chaperone and as an inhibitor for separase sep-1. Plays an essential role in maintaining chromosome cohesion prior to meiotic and mitotic anaphase, in cytokinesis and in organizing the spindle and the centrosome. Ubiquitination-dependent degradation at the onset of anaphase is likely to activate sep-1 resulting in the proteolysis of the cohesin complex and the subsequent segregation of the chromosomes. Also required for cortical granule exocytosis. This Caenorhabditis elegans protein is Securin-like protein.